The primary structure comprises 419 residues: L-rhamnose isomerase (419 aa).

H262, D294, and D296 together coordinate Mn(2+).

This sequence belongs to the rhamnose isomerase family. As to quaternary structure, homotetramer. It depends on Mn(2+) as a cofactor.

The protein localises to the cytoplasm. The catalysed reaction is L-rhamnopyranose = L-rhamnulose. It participates in carbohydrate degradation; L-rhamnose degradation; glycerone phosphate from L-rhamnose: step 1/3. Functionally, catalyzes the interconversion of L-rhamnose and L-rhamnulose. The sequence is that of L-rhamnose isomerase from Escherichia coli O6:H1 (strain CFT073 / ATCC 700928 / UPEC).